A 431-amino-acid chain; its full sequence is Glutamate-1-semialdehyde 2,1-aminomutase (431 aa).

N6-(pyridoxal phosphate)lysine is present on K269.

It belongs to the class-III pyridoxal-phosphate-dependent aminotransferase family. HemL subfamily. Homodimer. The cofactor is pyridoxal 5'-phosphate.

It localises to the cytoplasm. It carries out the reaction (S)-4-amino-5-oxopentanoate = 5-aminolevulinate. It participates in porphyrin-containing compound metabolism; protoporphyrin-IX biosynthesis; 5-aminolevulinate from L-glutamyl-tRNA(Glu): step 2/2. The sequence is that of Glutamate-1-semialdehyde 2,1-aminomutase from Francisella tularensis subsp. mediasiatica (strain FSC147).